The following is a 449-amino-acid chain: UDP-N-acetylmuramate--L-alanine ligase (449 aa).

121–127 (GAHGKSS) contributes to the ATP binding site.

Belongs to the MurCDEF family.

The protein localises to the cytoplasm. The catalysed reaction is UDP-N-acetyl-alpha-D-muramate + L-alanine + ATP = UDP-N-acetyl-alpha-D-muramoyl-L-alanine + ADP + phosphate + H(+). It participates in cell wall biogenesis; peptidoglycan biosynthesis. In terms of biological role, cell wall formation. This is UDP-N-acetylmuramate--L-alanine ligase from Helicobacter pylori (strain HPAG1).